The following is a 215-amino-acid chain: UPF0502 protein YceH (215 aa).

An N6-acetyllysine modification is found at Lys-80.

This sequence belongs to the UPF0502 family.

In Escherichia coli (strain K12 / MC4100 / BW2952), this protein is UPF0502 protein YceH.